A 309-amino-acid polypeptide reads, in one-letter code: Protein FdhE homolog (309 aa).

Residues 1–22 (MSIRIVPQEQLEQNGKSTPEGH) are disordered.

This sequence belongs to the FdhE family.

The protein resides in the cytoplasm. In terms of biological role, necessary for formate dehydrogenase activity. In Pectobacterium carotovorum subsp. carotovorum (strain PC1), this protein is Protein FdhE homolog.